Consider the following 293-residue polypeptide: Ribosomal RNA small subunit methyltransferase A (293 aa).

S-adenosyl-L-methionine contacts are provided by N33, V35, G60, E81, D111, and N130.

The protein belongs to the class I-like SAM-binding methyltransferase superfamily. rRNA adenine N(6)-methyltransferase family. RsmA subfamily.

The protein resides in the cytoplasm. The catalysed reaction is adenosine(1518)/adenosine(1519) in 16S rRNA + 4 S-adenosyl-L-methionine = N(6)-dimethyladenosine(1518)/N(6)-dimethyladenosine(1519) in 16S rRNA + 4 S-adenosyl-L-homocysteine + 4 H(+). Functionally, specifically dimethylates two adjacent adenosines (A1518 and A1519) in the loop of a conserved hairpin near the 3'-end of 16S rRNA in the 30S particle. May play a critical role in biogenesis of 30S subunits. The polypeptide is Ribosomal RNA small subunit methyltransferase A (Corynebacterium glutamicum (strain R)).